The sequence spans 180 residues: Large ribosomal subunit protein uL5 (180 aa).

Belongs to the universal ribosomal protein uL5 family. Part of the 50S ribosomal subunit; part of the 5S rRNA/L5/L18/L25 subcomplex. Contacts the 5S rRNA and the P site tRNA. Forms a bridge to the 30S subunit in the 70S ribosome.

Its function is as follows. This is one of the proteins that bind and probably mediate the attachment of the 5S RNA into the large ribosomal subunit, where it forms part of the central protuberance. In the 70S ribosome it contacts protein S13 of the 30S subunit (bridge B1b), connecting the 2 subunits; this bridge is implicated in subunit movement. Contacts the P site tRNA; the 5S rRNA and some of its associated proteins might help stabilize positioning of ribosome-bound tRNAs. The chain is Large ribosomal subunit protein uL5 from Xanthomonas axonopodis pv. citri (strain 306).